A 163-amino-acid chain; its full sequence is Photosystem II extrinsic protein V (163 aa).

An N-terminal signal peptide occupies residues 1-26 (MFRRLIGVVVATVLLSFQLLVGSATA). Residues cysteine 63, cysteine 66, histidine 67, and histidine 118 each coordinate heme c.

Belongs to the cytochrome c family. PsbV subfamily. In terms of assembly, PSII is composed of 1 copy each of membrane proteins PsbA, PsbB, PsbC, PsbD, PsbE, PsbF, PsbH, PsbI, PsbJ, PsbK, PsbL, PsbM, PsbT, PsbX, PsbY, PsbZ, Psb30/Ycf12, peripheral proteins PsbO, CyanoQ (PsbQ), PsbU, PsbV and a large number of cofactors. It forms dimeric complexes. Requires heme c as cofactor.

It localises to the cellular thylakoid membrane. In terms of biological role, one of the extrinsic, lumenal subunits of photosystem II (PSII). PSII is a light-driven water plastoquinone oxidoreductase, using light energy to abstract electrons from H(2)O, generating a proton gradient subsequently used for ATP formation. The extrinsic proteins stabilize the structure of photosystem II oxygen-evolving complex (OEC), the ion environment of oxygen evolution and protect the OEC against heat-induced inactivation. Low-potential cytochrome c that plays a role in the OEC of PSII. The protein is Photosystem II extrinsic protein V of Nostoc punctiforme (strain ATCC 29133 / PCC 73102).